A 34-amino-acid polypeptide reads, in one-letter code: MEVNILALIAIALFISVPTAFLIIIYVKTISENN.

Residues 5-25 (ILALIAIALFISVPTAFLIII) traverse the membrane as a helical segment.

It belongs to the PsbM family. In terms of assembly, PSII is composed of 1 copy each of membrane proteins PsbA, PsbB, PsbC, PsbD, PsbE, PsbF, PsbH, PsbI, PsbJ, PsbK, PsbL, PsbM, PsbT, PsbX, PsbY, PsbZ, Psb30/Ycf12, at least 3 peripheral proteins of the oxygen-evolving complex and a large number of cofactors. It forms dimeric complexes.

The protein localises to the plastid. The protein resides in the chloroplast thylakoid membrane. One of the components of the core complex of photosystem II (PSII). PSII is a light-driven water:plastoquinone oxidoreductase that uses light energy to abstract electrons from H(2)O, generating O(2) and a proton gradient subsequently used for ATP formation. It consists of a core antenna complex that captures photons, and an electron transfer chain that converts photonic excitation into a charge separation. This subunit is found at the monomer-monomer interface. The chain is Photosystem II reaction center protein M from Gnetum parvifolium (Small-leaved jointfir).